The primary structure comprises 215 residues: Probable GTP-binding protein EngB (215 aa).

The 175-residue stretch at 26 to 200 folds into the EngB-type G domain; sequence EGIEVAFAGR…RAKLDEWFAP (175 aa). GTP-binding positions include 34–41, 61–65, 79–82, 146–149, and 179–181; these read GRSNAGKS, GRTQL, DLPG, TKAD, and FSS. 2 residues coordinate Mg(2+): serine 41 and threonine 63.

This sequence belongs to the TRAFAC class TrmE-Era-EngA-EngB-Septin-like GTPase superfamily. EngB GTPase family. Requires Mg(2+) as cofactor.

Functionally, necessary for normal cell division and for the maintenance of normal septation. This is Probable GTP-binding protein EngB from Aliivibrio fischeri (strain ATCC 700601 / ES114) (Vibrio fischeri).